Reading from the N-terminus, the 696-residue chain is Probable glutamine--fructose-6-phosphate aminotransferase [isomerizing] (696 aa).

Residue C2 is the For GATase activity of the active site. In terms of domain architecture, Glutamine amidotransferase type-2 spans 2–303 (CGIFGYINYL…DDDIAHVRDG (302 aa)). SIS domains follow at residues 375–514 (YYDI…DSVS) and 547–686 (AIEQ…VDQP).

It catalyses the reaction D-fructose 6-phosphate + L-glutamine = D-glucosamine 6-phosphate + L-glutamate. Its pathway is nucleotide-sugar biosynthesis; UDP-N-acetyl-alpha-D-glucosamine biosynthesis; alpha-D-glucosamine 6-phosphate from D-fructose 6-phosphate: step 1/1. Involved in amino sugar synthesis (formation of chitin, supplies the amino sugars of asparagine-linked oligosaccharides of glycoproteins). The chain is Probable glutamine--fructose-6-phosphate aminotransferase [isomerizing] from Schizosaccharomyces pombe (strain 972 / ATCC 24843) (Fission yeast).